We begin with the raw amino-acid sequence, 873 residues long: Leucine--tRNA ligase (873 aa).

Positions 42 to 52 (PYPSGKLHMGH) match the 'HIGH' region motif. The segment at 624 to 643 (PVEIGGTEKMSKSKNNGVDP) is disordered. The 'KMSKS' region motif lies at 632 to 636 (KMSKS). ATP is bound at residue K635.

Belongs to the class-I aminoacyl-tRNA synthetase family.

Its subcellular location is the cytoplasm. The enzyme catalyses tRNA(Leu) + L-leucine + ATP = L-leucyl-tRNA(Leu) + AMP + diphosphate. The sequence is that of Leucine--tRNA ligase from Pseudomonas aeruginosa (strain ATCC 15692 / DSM 22644 / CIP 104116 / JCM 14847 / LMG 12228 / 1C / PRS 101 / PAO1).